The sequence spans 150 residues: Ribonuclease K6 (150 aa).

The signal sequence occupies residues 1–23 (MVLCFPLLLLLLVLWGPVCPLHA). His38 (proton acceptor) is an active-site residue. Intrachain disulfides connect Cys46–Cys104, Cys60–Cys114, Cys78–Cys129, and Cys85–Cys92. A glycan (N-linked (GlcNAc...) asparagine) is linked at Asn55. Residues 61 to 65 (KHQNT) and Lys86 contribute to the substrate site. Residue Asn100 is glycosylated (N-linked (GlcNAc...) asparagine). Residue Arg105 coordinates substrate. His145 functions as the Proton donor in the catalytic mechanism.

Belongs to the pancreatic ribonuclease family. In terms of assembly, interacts (via N-terminus) with bacterial lipopolysaccharide (LPS). In terms of tissue distribution, highly expressed in spleen (at protein level). Has little or no expression in healthy kidneys (at protein level). Detected in interstitial leukocytes in infected kidneys (at protein level). Expressed in ureter where it localizes to urothelial and submucosal leukocytes (at protein level). Strong expression in lung and thymus, and lower expression in heart, placenta, pancreas, liver, brain and skeletal muscle. Also expressed in monocytes and neutrophils.

It is found in the secreted. Its subcellular location is the lysosome. The protein localises to the cytoplasmic granule. In terms of biological role, ribonuclease which shows a preference for the pyrimidines uridine and cytosine. Has potent antibacterial activity against a range of Gram-positive and Gram-negative bacteria, including P.aeruginosa, A.baumanii, M.luteus, S.aureus, E.faecalis, E.faecium, S.saprophyticus and E.coli. Causes loss of bacterial membrane integrity, and also promotes agglutination of Gram-negative bacteria. Probably contributes to urinary tract sterility. Bactericidal activity is independent of RNase activity. The chain is Ribonuclease K6 (RNASE6) from Homo sapiens (Human).